We begin with the raw amino-acid sequence, 199 residues long: NAD(P)H dehydrogenase (quinone) (199 aa).

The 187-residue stretch at 4–190 (MLVLYYSAYG…DDARFQGRRV (187 aa)) folds into the Flavodoxin-like domain. FMN-binding positions include 10–15 (SAYGHM) and 78–80 (TRY). Residue tyrosine 12 participates in NAD(+) binding. Residue tryptophan 98 participates in substrate binding. Residues 113-119 (STATQHG) and histidine 134 contribute to the FMN site. Positions 158–181 (GAPYGMTTTADGDGSRQPSAQELD) are disordered. A compositionally biased stretch (polar residues) spans 163 to 177 (MTTTADGDGSRQPSA).

The protein belongs to the WrbA family. It depends on FMN as a cofactor.

It carries out the reaction a quinone + NADH + H(+) = a quinol + NAD(+). The catalysed reaction is a quinone + NADPH + H(+) = a quinol + NADP(+). This Brucella ovis (strain ATCC 25840 / 63/290 / NCTC 10512) protein is NAD(P)H dehydrogenase (quinone).